Reading from the N-terminus, the 448-residue chain is Bifunctional protein GlmU (448 aa).

The segment at 1–229 (MNNHTLNIII…NDEIQGINNL (229 aa)) is pyrophosphorylase. UDP-N-acetyl-alpha-D-glucosamine is bound by residues 11–14 (LAAG), Lys-25, Gln-76, 81–82 (GT), 103–105 (YGD), Gly-140, Glu-154, Asn-169, and Asn-227. Mg(2+) is bound at residue Asp-105. Asn-227 is a Mg(2+) binding site. The interval 230 to 250 (LQLVRAEKIYQKQQAKLLLLS) is linker. Positions 251 to 448 (GIMIYNPSNF…NEKKQIHKKL (198 aa)) are N-acetyltransferase. Lys-351 provides a ligand contact to UDP-N-acetyl-alpha-D-glucosamine. The active-site Proton acceptor is His-363. 2 residues coordinate UDP-N-acetyl-alpha-D-glucosamine: Tyr-366 and Asn-377. Acetyl-CoA contacts are provided by residues Ala-380, 386–387 (NY), Ser-405, and Ala-423.

In the N-terminal section; belongs to the N-acetylglucosamine-1-phosphate uridyltransferase family. It in the C-terminal section; belongs to the transferase hexapeptide repeat family. As to quaternary structure, homotrimer. Requires Mg(2+) as cofactor.

It localises to the cytoplasm. It carries out the reaction alpha-D-glucosamine 1-phosphate + acetyl-CoA = N-acetyl-alpha-D-glucosamine 1-phosphate + CoA + H(+). The catalysed reaction is N-acetyl-alpha-D-glucosamine 1-phosphate + UTP + H(+) = UDP-N-acetyl-alpha-D-glucosamine + diphosphate. The protein operates within nucleotide-sugar biosynthesis; UDP-N-acetyl-alpha-D-glucosamine biosynthesis; N-acetyl-alpha-D-glucosamine 1-phosphate from alpha-D-glucosamine 6-phosphate (route II): step 2/2. Its pathway is nucleotide-sugar biosynthesis; UDP-N-acetyl-alpha-D-glucosamine biosynthesis; UDP-N-acetyl-alpha-D-glucosamine from N-acetyl-alpha-D-glucosamine 1-phosphate: step 1/1. It functions in the pathway bacterial outer membrane biogenesis; LPS lipid A biosynthesis. Functionally, catalyzes the last two sequential reactions in the de novo biosynthetic pathway for UDP-N-acetylglucosamine (UDP-GlcNAc). The C-terminal domain catalyzes the transfer of acetyl group from acetyl coenzyme A to glucosamine-1-phosphate (GlcN-1-P) to produce N-acetylglucosamine-1-phosphate (GlcNAc-1-P), which is converted into UDP-GlcNAc by the transfer of uridine 5-monophosphate (from uridine 5-triphosphate), a reaction catalyzed by the N-terminal domain. This is Bifunctional protein GlmU from Buchnera aphidicola subsp. Baizongia pistaciae (strain Bp).